The sequence spans 253 residues: Indole-3-glycerol phosphate synthase (253 aa).

This sequence belongs to the TrpC family.

The catalysed reaction is 1-(2-carboxyphenylamino)-1-deoxy-D-ribulose 5-phosphate + H(+) = (1S,2R)-1-C-(indol-3-yl)glycerol 3-phosphate + CO2 + H2O. Its pathway is amino-acid biosynthesis; L-tryptophan biosynthesis; L-tryptophan from chorismate: step 4/5. This is Indole-3-glycerol phosphate synthase from Bacillus anthracis (strain A0248).